We begin with the raw amino-acid sequence, 1377 residues long: DNA-directed RNA polymerase subunit beta' (1377 aa).

C60, C62, C75, and C78 together coordinate Zn(2+). Positions 449, 451, and 453 each coordinate Mg(2+). Zn(2+)-binding residues include C777, C851, C858, and C861.

Belongs to the RNA polymerase beta' chain family. As to quaternary structure, the RNAP catalytic core consists of 2 alpha, 1 beta, 1 beta' and 1 omega subunit. When a sigma factor is associated with the core the holoenzyme is formed, which can initiate transcription. The cofactor is Mg(2+). Requires Zn(2+) as cofactor.

It catalyses the reaction RNA(n) + a ribonucleoside 5'-triphosphate = RNA(n+1) + diphosphate. DNA-dependent RNA polymerase catalyzes the transcription of DNA into RNA using the four ribonucleoside triphosphates as substrates. The polypeptide is DNA-directed RNA polymerase subunit beta' (Borrelia hermsii (strain HS1 / DAH)).